The sequence spans 213 residues: Small ribosomal subunit protein uS5 (213 aa).

The disordered stretch occupies residues Met-1 to Glu-41. The region spanning Phe-45–Val-108 is the S5 DRBM domain.

The protein belongs to the universal ribosomal protein uS5 family. Part of the 30S ribosomal subunit. Contacts proteins S4 and S8.

In terms of biological role, with S4 and S12 plays an important role in translational accuracy. Located at the back of the 30S subunit body where it stabilizes the conformation of the head with respect to the body. The protein is Small ribosomal subunit protein uS5 of Corynebacterium jeikeium (strain K411).